We begin with the raw amino-acid sequence, 173 residues long: Bifunctional protein PyrR (173 aa).

The PRPP-binding signature appears at 94-106; that stretch reads VILIDDVLYTGRT.

This sequence belongs to the purine/pyrimidine phosphoribosyltransferase family. PyrR subfamily. In terms of assembly, homodimer and homohexamer; in equilibrium.

It carries out the reaction UMP + diphosphate = 5-phospho-alpha-D-ribose 1-diphosphate + uracil. Functionally, regulates transcriptional attenuation of the pyrimidine nucleotide (pyr) operon by binding in a uridine-dependent manner to specific sites on pyr mRNA. This disrupts an antiterminator hairpin in the RNA and favors formation of a downstream transcription terminator, leading to a reduced expression of downstream genes. In terms of biological role, also displays a weak uracil phosphoribosyltransferase activity which is not physiologically significant. This is Bifunctional protein PyrR from Streptococcus gordonii (strain Challis / ATCC 35105 / BCRC 15272 / CH1 / DL1 / V288).